The following is a 106-amino-acid chain: DNA-directed RNA polymerase subunit omega (106 aa).

The disordered stretch occupies residues Arg-76 to Ala-106. Basic and acidic residues predominate over residues Glu-92–Ala-106.

This sequence belongs to the RNA polymerase subunit omega family. In terms of assembly, the RNAP catalytic core consists of 2 alpha, 1 beta, 1 beta' and 1 omega subunit. When a sigma factor is associated with the core the holoenzyme is formed, which can initiate transcription.

The enzyme catalyses RNA(n) + a ribonucleoside 5'-triphosphate = RNA(n+1) + diphosphate. Its function is as follows. Promotes RNA polymerase assembly. Latches the N- and C-terminal regions of the beta' subunit thereby facilitating its interaction with the beta and alpha subunits. This Rubrobacter xylanophilus (strain DSM 9941 / JCM 11954 / NBRC 16129 / PRD-1) protein is DNA-directed RNA polymerase subunit omega.